A 65-amino-acid chain; its full sequence is Large ribosomal subunit protein bL35 (65 aa).

Residues 1–20 form a disordered region; it reads MPKMKTNSGSKKRFTLTGTG.

Belongs to the bacterial ribosomal protein bL35 family.

The sequence is that of Large ribosomal subunit protein bL35 from Bacteroides thetaiotaomicron (strain ATCC 29148 / DSM 2079 / JCM 5827 / CCUG 10774 / NCTC 10582 / VPI-5482 / E50).